The sequence spans 476 residues: Angiotensinogen (476 aa).

The N-terminal stretch at 1–24 is a signal peptide; it reads MAPAGVSLRATILCLVAWAGLAAG. N-linked (GlcNAc...) asparagine glycans are attached at residues asparagine 38, asparagine 161, asparagine 295, and asparagine 319. Residues cysteine 42 and cysteine 162 are joined by a disulfide bond.

The protein belongs to the serpin family. Post-translationally, in response to low blood pressure, the enzyme renin/REN cleaves angiotensinogen to produce angiotensin-1. Angiotensin-1 is a substrate of ACE (angiotensin converting enzyme) that removes a dipeptide to yield the physiologically active peptide angiotensin-2. Angiotensin-1 and angiotensin-2 can be further processed to generate angiotensin-3, angiotensin-4. Angiotensin 1-9 is cleaved from angiotensin-1 by ACE2 and can be further processed by ACE to produce angiotensin 1-7, angiotensin 1-5 and angiotensin 1-4. Angiotensin 1-7 has also been proposed to be cleaved from angiotensin-2 by ACE2 or from angiotensin-1 by MME (neprilysin). The disulfide bond is labile. Angiotensinogen is present in the circulation in a near 40:60 ratio with the oxidized disulfide-bonded form, which preferentially interacts with receptor-bound renin.

The protein localises to the secreted. Its function is as follows. Essential component of the renin-angiotensin system (RAS), a potent regulator of blood pressure, body fluid and electrolyte homeostasis. Acts directly on vascular smooth muscle as a potent vasoconstrictor, affects cardiac contractility and heart rate through its action on the sympathetic nervous system, and alters renal sodium and water absorption through its ability to stimulate the zona glomerulosa cells of the adrenal cortex to synthesize and secrete aldosterone. Acts by binding to angiotensin receptors AGTR1 and AGTR2. Also binds the DEAR/FBXW7-AS1 receptor. In terms of biological role, stimulates aldosterone release. Functionally, is a ligand for the G-protein coupled receptor MAS1. Has vasodilator and antidiuretic effects. Has an antithrombotic effect that involves MAS1-mediated release of nitric oxide from platelets. The chain is Angiotensinogen (AGT) from Pan troglodytes (Chimpanzee).